Consider the following 414-residue polypeptide: NADH kinase POS5, mitochondrial (414 aa).

This sequence belongs to the NAD kinase family.

The protein resides in the mitochondrion matrix. It catalyses the reaction NADH + ATP = ADP + NADPH + H(+). In terms of biological role, phosphorylates both NADH and NAD(+), with a twofold preference for NADH. Anti-oxidant factor and key source of the cellular reductant NADPH. This chain is NADH kinase POS5, mitochondrial (POS5), found in Saccharomyces cerevisiae (strain ATCC 204508 / S288c) (Baker's yeast).